Consider the following 231-residue polypeptide: Probable pseudouridine-5'-phosphatase (231 aa).

The active-site Nucleophile is Asp-15. Mg(2+) is bound by residues Asp-15 and Asp-17. Catalysis depends on Asp-17, which acts as the Proton donor.

The protein belongs to the HAD-like hydrolase superfamily. CbbY/CbbZ/Gph/YieH family. The cofactor is Mg(2+).

It carries out the reaction psi-UMP + H2O = pseudouridine + phosphate. Dephosphorylates pseudouridine 5'-phosphate, a potential intermediate in rRNA degradation. The chain is Probable pseudouridine-5'-phosphatase (Gs1l) from Drosophila melanogaster (Fruit fly).